The chain runs to 118 residues: MISKPDKNKLRQKRHRRVRGKLSGTADRPRLNVFRSNTGIYAQVIDDVAGVTLASASTLDKEVSKGTKTEQAVAVGKLVAERANAKGISEVVFDRGGYLYHGRVKALADAARENGLKF.

The tract at residues 1 to 25 (MISKPDKNKLRQKRHRRVRGKLSGT) is disordered. The span at 10-20 (LRQKRHRRVRG) shows a compositional bias: basic residues.

This sequence belongs to the universal ribosomal protein uL18 family. In terms of assembly, part of the 50S ribosomal subunit; part of the 5S rRNA/L5/L18/L25 subcomplex. Contacts the 5S and 23S rRNAs.

Its function is as follows. This is one of the proteins that bind and probably mediate the attachment of the 5S RNA into the large ribosomal subunit, where it forms part of the central protuberance. The sequence is that of Large ribosomal subunit protein uL18 from Streptococcus pneumoniae (strain Hungary19A-6).